Consider the following 113-residue polypeptide: MQEARATTKYQRVSPYKVRLVIDQIRGMQVESAMNLLAFSKKRVAGVVRQTLKSAVANAEENLGLDVDTLVVSQAYVDQGPSMKRFKPRARGRATRILKRTSHITVAVCPQVD.

It belongs to the universal ribosomal protein uL22 family. As to quaternary structure, part of the 50S ribosomal subunit.

This protein binds specifically to 23S rRNA; its binding is stimulated by other ribosomal proteins, e.g. L4, L17, and L20. It is important during the early stages of 50S assembly. It makes multiple contacts with different domains of the 23S rRNA in the assembled 50S subunit and ribosome. Functionally, the globular domain of the protein is located near the polypeptide exit tunnel on the outside of the subunit, while an extended beta-hairpin is found that lines the wall of the exit tunnel in the center of the 70S ribosome. The protein is Large ribosomal subunit protein uL22 of Magnetococcus marinus (strain ATCC BAA-1437 / JCM 17883 / MC-1).